A 316-amino-acid polypeptide reads, in one-letter code: Neuroguidin-B (316 aa).

2 disordered regions span residues 124–169 (ENDP…SKVK) and 292–316 (VPFM…RRRH). The span at 145–156 (DERESDSGEEGA) shows a compositional bias: acidic residues. The span at 296–316 (KKSKKGPKKSKKKKGFSRRRH) shows a compositional bias: basic residues.

Belongs to the SAS10 family. As to quaternary structure, part of the small subunit (SSU) processome, composed of more than 70 proteins and the RNA chaperone small nucleolar RNA (snoRNA) U3.

It localises to the nucleus. The protein localises to the nucleolus. The protein resides in the chromosome. It is found in the centromere. Its subcellular location is the cytoplasm. It localises to the cell projection. The protein localises to the axon. The protein resides in the dendrite. It is found in the filopodium. Its function is as follows. Part of the small subunit (SSU) processome, first precursor of the small eukaryotic ribosomal subunit. During the assembly of the SSU processome in the nucleolus, many ribosome biogenesis factors, an RNA chaperone and ribosomal proteins associate with the nascent pre-rRNA and work in concert to generate RNA folding, modifications, rearrangements and cleavage as well as targeted degradation of pre-ribosomal RNA by the RNA exosome. Its dissociation from the complex determines the transition from state pre-A1 to state pre-A1*. May inhibit mRNA translation. The sequence is that of Neuroguidin-B (ngdn-b) from Xenopus laevis (African clawed frog).